Consider the following 70-residue polypeptide: Large ribosomal subunit protein bL31 (70 aa).

4 residues coordinate Zn(2+): Cys-16, Cys-18, Cys-37, and Cys-40.

Belongs to the bacterial ribosomal protein bL31 family. Type A subfamily. In terms of assembly, part of the 50S ribosomal subunit. The cofactor is Zn(2+).

Its function is as follows. Binds the 23S rRNA. The sequence is that of Large ribosomal subunit protein bL31 from Shewanella frigidimarina (strain NCIMB 400).